Consider the following 75-residue polypeptide: Small ribosomal subunit protein bS18 (75 aa).

The protein belongs to the bacterial ribosomal protein bS18 family. In terms of assembly, part of the 30S ribosomal subunit. Forms a tight heterodimer with protein bS6.

Its function is as follows. Binds as a heterodimer with protein bS6 to the central domain of the 16S rRNA, where it helps stabilize the platform of the 30S subunit. This chain is Small ribosomal subunit protein bS18, found in Shewanella denitrificans (strain OS217 / ATCC BAA-1090 / DSM 15013).